Here is a 508-residue protein sequence, read N- to C-terminus: MSRKLITINQVKDYVGQEVTIGAWVANKSGKGKLAFLQLRDGTAFFQAVAFKPNFIEKFGEEAGTEKFDVAKRLSQETSVYVTGIVKEDERSKFGYELDVTDLEVIGESQDYPITPKEHGTDFLMDNRHLWLRSRKQVAIQQIRNAIIYATYEFFEKNGFIKFDSPILSGNAAEDSTELFETDYFGQLAYLSQSGQLYLEAGAMALGRVFDFGPVFRAEKSKTRRHLTEFWMMDAEYSFLSHEESLDLQEAYVKALIQGVIDRAPQALETLERDVDALKRYIAEPFKRVAYDDAITLLQEHEADKDTDYEHIEHGDDFGSPHETWISNYFGVPTFVVNYPASFKAFYMKPVPGNPERVLCADLLAPEGYGEIIGGSMREDNYDALVAKMDELGMDKSEYEFYLDLRKYGSVPHGGFGIGIERMVTFVAGTKHIREAIPFPTFVAPLASVIQSSIFPFITSTYEETPFPFSQVQIFSSLLDLVWPSLITVGTSWPITKIKRKNCKIIFP.

It belongs to the class-II aminoacyl-tRNA synthetase family. Homodimer.

It is found in the cytoplasm. The catalysed reaction is tRNA(Asn) + L-asparagine + ATP = L-asparaginyl-tRNA(Asn) + AMP + diphosphate + H(+). The protein is Asparagine--tRNA ligase of Streptococcus suis (strain 05ZYH33).